A 388-amino-acid polypeptide reads, in one-letter code: MPISETWLLPDGVADVLPEQAQVVETLRRQALDFLASRGYQLVYTPFIEYIESLSLLSESNHDLDLVTFKVIDQLSGRLLGVRADMTPQVARIDAHVRSIEGVARYCYAGTVLHTKPQNFNSSRAPLQLGAELYGHQSLEADIEMVDVMLGLIQQAHNLEGLHLDLGHVGLFRSLVKRAGLSKQVEQDLSDLYQRKALPELEEVTKTLAFGSDFYALGRYASDLNALEQHLSQDVLNDASFKTSLDDLKTTLSQIQTRWPNLRIGIDVVELRSYHYHTGLMYAVYAPNRAAPLAQGGRYDGIGEHFGRARPATGFSCDLYALCVGQFKEIETIVAPAGQDQQLLGAIAQARQNGLRVIQLLGNDDLSSVPYATHKMELAQDQWQINKI.

Belongs to the class-II aminoacyl-tRNA synthetase family. HisZ subfamily. In terms of assembly, heteromultimer composed of HisG and HisZ subunits.

Its subcellular location is the cytoplasm. The protein operates within amino-acid biosynthesis; L-histidine biosynthesis; L-histidine from 5-phospho-alpha-D-ribose 1-diphosphate: step 1/9. Its function is as follows. Required for the first step of histidine biosynthesis. May allow the feedback regulation of ATP phosphoribosyltransferase activity by histidine. The polypeptide is ATP phosphoribosyltransferase regulatory subunit (Acinetobacter baylyi (strain ATCC 33305 / BD413 / ADP1)).